The following is a 426-amino-acid chain: Glutamate/glutamine/aspartate/asparagine transport system permease protein BztB (426 aa).

The next 8 helical transmembrane spans lie at 25-45 (SITIQIVVLLLFLAGLVWLLN), 96-116 (LLVSVLGCILATILGTIIGVL), 132-152 (VETFRNIPLLLWILLMGTILA), 211-231 (LPVSLNALAILAVMSASFWGW), 252-272 (WWPSLLILFAPISALLYGLGF), 293-313 (SFTALLIALTLYTAAFIAEIV), 340-360 (SLVILPQALRVIVPPLISQFL), and 396-416 (MLLMMLIYLTISLTISSLMNL). In terms of domain architecture, ABC transmembrane type-1 spans 92–414 (LLNTLLVSVL…TISLTISSLM (323 aa)).

This sequence belongs to the binding-protein-dependent transport system permease family. HisMQ subfamily. BztB and BztC form a heterodimer which can form a membrane complex with a homodimer of BztD.

It localises to the cell inner membrane. Functionally, part of a binding-protein-dependent transport system for glutamate, glutamine, aspartate and asparagine. Probably responsible for the translocation of the substrate across the membrane. The polypeptide is Glutamate/glutamine/aspartate/asparagine transport system permease protein BztB (bztB) (Rhodobacter capsulatus (strain ATCC BAA-309 / NBRC 16581 / SB1003)).